Here is a 154-residue protein sequence, read N- to C-terminus: uncharacterized protein (154 aa).

The helical transmembrane segment at 23–43 threads the bilayer; it reads SAVALVTFAGAALSGVIPAIA.

It is found in the membrane. This is an uncharacterized protein from Mycobacterium tuberculosis (strain CDC 1551 / Oshkosh).